A 508-amino-acid polypeptide reads, in one-letter code: Photosystem II CP47 reaction center protein (508 aa).

The next 6 helical transmembrane spans lie at 21–36 (SVHI…WAGS), 101–115 (IVFS…IWHW), 140–156 (GIHL…FGAF), 203–218 (IAAG…FHLS), 237–252 (VLSS…AFVV), and 457–472 (SFAL…HGAR).

The protein belongs to the PsbB/PsbC family. PsbB subfamily. PSII is composed of 1 copy each of membrane proteins PsbA, PsbB, PsbC, PsbD, PsbE, PsbF, PsbH, PsbI, PsbJ, PsbK, PsbL, PsbM, PsbT, PsbX, PsbY, PsbZ, Psb30/Ycf12, at least 3 peripheral proteins of the oxygen-evolving complex and a large number of cofactors. It forms dimeric complexes. Binds multiple chlorophylls. PSII binds additional chlorophylls, carotenoids and specific lipids. is required as a cofactor.

It is found in the plastid. The protein resides in the chloroplast thylakoid membrane. Its function is as follows. One of the components of the core complex of photosystem II (PSII). It binds chlorophyll and helps catalyze the primary light-induced photochemical processes of PSII. PSII is a light-driven water:plastoquinone oxidoreductase, using light energy to abstract electrons from H(2)O, generating O(2) and a proton gradient subsequently used for ATP formation. The chain is Photosystem II CP47 reaction center protein from Barbarea verna (Land cress).